The primary structure comprises 788 residues: Patatin-like phospholipase domain-containing protein DEHA2B04136g (788 aa).

A helical transmembrane segment spans residues W136–V156. Positions L311–N503 constitute a PNPLA domain. The short motif at G342 to G346 is the GXSXG element. S344 acts as the Nucleophile in catalysis. D490 acts as the Proton acceptor in catalysis. A compositionally biased stretch (polar residues) spans A662 to S672. The tract at residues A662 to F771 is disordered. Composition is skewed to acidic residues over residues M690–V705 and E723–N749.

Belongs to the PLPL family.

Its subcellular location is the membrane. Probable lipid hydrolase. This Debaryomyces hansenii (strain ATCC 36239 / CBS 767 / BCRC 21394 / JCM 1990 / NBRC 0083 / IGC 2968) (Yeast) protein is Patatin-like phospholipase domain-containing protein DEHA2B04136g.